Consider the following 416-residue polypeptide: Gamma-glutamyl phosphate reductase (416 aa).

The protein belongs to the gamma-glutamyl phosphate reductase family.

Its subcellular location is the cytoplasm. The catalysed reaction is L-glutamate 5-semialdehyde + phosphate + NADP(+) = L-glutamyl 5-phosphate + NADPH + H(+). Its pathway is amino-acid biosynthesis; L-proline biosynthesis; L-glutamate 5-semialdehyde from L-glutamate: step 2/2. Catalyzes the NADPH-dependent reduction of L-glutamate 5-phosphate into L-glutamate 5-semialdehyde and phosphate. The product spontaneously undergoes cyclization to form 1-pyrroline-5-carboxylate. The sequence is that of Gamma-glutamyl phosphate reductase from Salmonella heidelberg (strain SL476).